We begin with the raw amino-acid sequence, 243 residues long: Peptidyl-tRNA hydrolase (243 aa).

Residue Tyr14 participates in tRNA binding. His19 serves as the catalytic Proton acceptor. TRNA-binding residues include Phe64, Asn66, and Asn112. The tract at residues 184 to 225 (AAQTRPAEKAKPLATAKPKEGEARTSGGSVAEVGAPPPSPTG) is disordered. Positions 189 to 206 (PAEKAKPLATAKPKEGEA) are enriched in basic and acidic residues.

This sequence belongs to the PTH family. In terms of assembly, monomer.

It localises to the cytoplasm. The enzyme catalyses an N-acyl-L-alpha-aminoacyl-tRNA + H2O = an N-acyl-L-amino acid + a tRNA + H(+). Hydrolyzes ribosome-free peptidyl-tRNAs (with 1 or more amino acids incorporated), which drop off the ribosome during protein synthesis, or as a result of ribosome stalling. Functionally, catalyzes the release of premature peptidyl moieties from peptidyl-tRNA molecules trapped in stalled 50S ribosomal subunits, and thus maintains levels of free tRNAs and 50S ribosomes. The sequence is that of Peptidyl-tRNA hydrolase from Rhodospirillum rubrum (strain ATCC 11170 / ATH 1.1.1 / DSM 467 / LMG 4362 / NCIMB 8255 / S1).